The sequence spans 324 residues: 6-methylsalicylic acid decarboxylase (324 aa).

The Zn(2+) site is built by His7, His9, His157, and Asp274.

Belongs to the metallo-dependent hydrolases superfamily. ACMSD family. As to quaternary structure, monomer.

It is found in the cytoplasm. It localises to the cytosol. The enzyme catalyses 6-methylsalicylate + H(+) = 3-methylphenol + CO2. The protein operates within mycotoxin biosynthesis; patulin biosynthesis. Its function is as follows. 6-methylsalicylic acid decarboxylase; part of the gene cluster that mediates the biosynthesis of patulin, an acetate-derived tetraketide mycotoxin produced by several fungal species that shows antimicrobial properties against several bacteria. PatG catalyzes the decarboxylation of 6-methylsalicylic acid to yield m-cresol. The pathway begins with the synthesis of 6-methylsalicylic acid by the polyketide synthase (PKS) patK via condensation of acetate and malonate units. The 6-methylsalicylic acid decarboxylase patG then catalyzes the decarboxylation of 6-methylsalicylic acid to yield m-cresol (also known as 3-methylphenol). These first reactions occur in the cytosol. The intermediate m-cresol is then transported into the endoplasmic reticulum where the cytochrome P450 monooxygenase patH converts it to m-hydroxybenzyl alcohol, which is further converted to gentisyl alcohol by the cytochrome P450 monooxygenase patI. The oxidoreductases patJ and patO further convert gentisyl alcohol to isoepoxydon in the vacuole. PatN catalyzes then the transformation of isoepoxydon into phyllostine. The cluster protein patF is responsible for the conversion from phyllostine to neopatulin whereas the alcohol dehydrogenase patD converts neopatulin to E-ascladiol. The steps between isoepoxydon and E-ascladiol occur in the cytosol, and E-ascladiol is probably secreted to the extracellular space by one of the cluster-specific transporters patC or patM. Finally, the secreted patulin synthase patE catalyzes the conversion of E-ascladiol to patulin. This Penicillium expansum (Blue mold rot fungus) protein is 6-methylsalicylic acid decarboxylase.